The primary structure comprises 574 residues: Proline--tRNA ligase (574 aa).

Belongs to the class-II aminoacyl-tRNA synthetase family. ProS type 1 subfamily. As to quaternary structure, homodimer.

Its subcellular location is the cytoplasm. The enzyme catalyses tRNA(Pro) + L-proline + ATP = L-prolyl-tRNA(Pro) + AMP + diphosphate. In terms of biological role, catalyzes the attachment of proline to tRNA(Pro) in a two-step reaction: proline is first activated by ATP to form Pro-AMP and then transferred to the acceptor end of tRNA(Pro). As ProRS can inadvertently accommodate and process non-cognate amino acids such as alanine and cysteine, to avoid such errors it has two additional distinct editing activities against alanine. One activity is designated as 'pretransfer' editing and involves the tRNA(Pro)-independent hydrolysis of activated Ala-AMP. The other activity is designated 'posttransfer' editing and involves deacylation of mischarged Ala-tRNA(Pro). The misacylated Cys-tRNA(Pro) is not edited by ProRS. The sequence is that of Proline--tRNA ligase from Nitrosococcus oceani (strain ATCC 19707 / BCRC 17464 / JCM 30415 / NCIMB 11848 / C-107).